A 370-amino-acid polypeptide reads, in one-letter code: Pyruvate dehydrogenase E1 component subunit alpha (370 aa).

In terms of assembly, heterodimer of an alpha and a beta chain. It depends on thiamine diphosphate as a cofactor.

The catalysed reaction is N(6)-[(R)-lipoyl]-L-lysyl-[protein] + pyruvate + H(+) = N(6)-[(R)-S(8)-acetyldihydrolipoyl]-L-lysyl-[protein] + CO2. The pyruvate dehydrogenase complex catalyzes the overall conversion of pyruvate to acetyl-CoA and CO(2). It contains multiple copies of three enzymatic components: pyruvate dehydrogenase (E1), dihydrolipoamide acetyltransferase (E2) and lipoamide dehydrogenase (E3). This Staphylococcus aureus (strain COL) protein is Pyruvate dehydrogenase E1 component subunit alpha (pdhA).